Reading from the N-terminus, the 496-residue chain is Cytochrome P450 71A15 (496 aa).

The chain crosses the membrane as a helical span at residues 3–23 (IIIISLCLATILAFLLLKPLL). Heme is bound at residue C439.

It belongs to the cytochrome P450 family. Heme is required as a cofactor.

Its subcellular location is the membrane. The protein is Cytochrome P450 71A15 (CYP71A15) of Arabidopsis thaliana (Mouse-ear cress).